The chain runs to 336 residues: Pyridoxal 5'-phosphate synthase subunit PdxS (336 aa).

Position 62 (aspartate 62) interacts with D-ribose 5-phosphate. Lysine 119 (schiff-base intermediate with D-ribose 5-phosphate) is an active-site residue. A D-ribose 5-phosphate-binding site is contributed by glycine 191. Position 203 (lysine 203) interacts with D-glyceraldehyde 3-phosphate. D-ribose 5-phosphate-binding positions include glycine 254 and 275–276 (GS).

The protein belongs to the PdxS/SNZ family. In the presence of PdxT, forms a dodecamer of heterodimers.

It catalyses the reaction aldehydo-D-ribose 5-phosphate + D-glyceraldehyde 3-phosphate + L-glutamine = pyridoxal 5'-phosphate + L-glutamate + phosphate + 3 H2O + H(+). It functions in the pathway cofactor biosynthesis; pyridoxal 5'-phosphate biosynthesis. Its function is as follows. Catalyzes the formation of pyridoxal 5'-phosphate from ribose 5-phosphate (RBP), glyceraldehyde 3-phosphate (G3P) and ammonia. The ammonia is provided by the PdxT subunit. Can also use ribulose 5-phosphate and dihydroxyacetone phosphate as substrates, resulting from enzyme-catalyzed isomerization of RBP and G3P, respectively. In Pyrobaculum calidifontis (strain DSM 21063 / JCM 11548 / VA1), this protein is Pyridoxal 5'-phosphate synthase subunit PdxS.